We begin with the raw amino-acid sequence, 116 residues long: Peptidyl-tRNA hydrolase (116 aa).

It belongs to the PTH2 family.

The protein localises to the cytoplasm. It carries out the reaction an N-acyl-L-alpha-aminoacyl-tRNA + H2O = an N-acyl-L-amino acid + a tRNA + H(+). The natural substrate for this enzyme may be peptidyl-tRNAs which drop off the ribosome during protein synthesis. This Methanopyrus kandleri (strain AV19 / DSM 6324 / JCM 9639 / NBRC 100938) protein is Peptidyl-tRNA hydrolase.